Reading from the N-terminus, the 435-residue chain is GTPase Der (435 aa).

2 consecutive EngA-type G domains span residues 4–167 (PTLA…PSED) and 175–350 (IKFS…ENQT). Residues 10 to 17 (GRPNVGKS), 57 to 61 (DTGGI), 119 to 122 (NKVD), 181 to 188 (GRPNVGKS), 228 to 232 (DTAGI), and 293 to 296 (NKWD) each bind GTP. The 85-residue stretch at 351 to 435 (RRIQSSVLND…PIHIIARKRK (85 aa)) folds into the KH-like domain.

The protein belongs to the TRAFAC class TrmE-Era-EngA-EngB-Septin-like GTPase superfamily. EngA (Der) GTPase family. In terms of assembly, associates with the 50S ribosomal subunit.

GTPase that plays an essential role in the late steps of ribosome biogenesis. The chain is GTPase Der from Lacticaseibacillus paracasei (strain ATCC 334 / BCRC 17002 / CCUG 31169 / CIP 107868 / KCTC 3260 / NRRL B-441) (Lactobacillus paracasei).